Reading from the N-terminus, the 297-residue chain is Probable tyrosine phosphatase protein J2 (297 aa).

The 266-residue stretch at 21 to 286 folds into the Tyrosine-protein phosphatase domain; the sequence is DSLSCIIQEY…VFCYHLIHAY (266 aa). Cys227 (phosphocysteine intermediate) is an active-site residue.

The protein belongs to the protein-tyrosine phosphatase family.

The catalysed reaction is O-phospho-L-tyrosyl-[protein] + H2O = L-tyrosyl-[protein] + phosphate. The polypeptide is Probable tyrosine phosphatase protein J2 (J3) (Microplitis demolitor (Parasitoid wasp)).